The sequence spans 302 residues: Sulfate adenylyltransferase subunit 2 (302 aa).

The protein belongs to the PAPS reductase family. CysD subfamily. As to quaternary structure, heterodimer composed of CysD, the smaller subunit, and CysN.

The catalysed reaction is sulfate + ATP + H(+) = adenosine 5'-phosphosulfate + diphosphate. It functions in the pathway sulfur metabolism; hydrogen sulfide biosynthesis; sulfite from sulfate: step 1/3. With CysN forms the ATP sulfurylase (ATPS) that catalyzes the adenylation of sulfate producing adenosine 5'-phosphosulfate (APS) and diphosphate, the first enzymatic step in sulfur assimilation pathway. APS synthesis involves the formation of a high-energy phosphoric-sulfuric acid anhydride bond driven by GTP hydrolysis by CysN coupled to ATP hydrolysis by CysD. This chain is Sulfate adenylyltransferase subunit 2, found in Xanthomonas axonopodis pv. citri (strain 306).